The sequence spans 520 residues: 2,3-bisphosphoglycerate-independent phosphoglycerate mutase (520 aa).

Mn(2+) is bound by residues aspartate 13 and serine 63. Serine 63 functions as the Phosphoserine intermediate in the catalytic mechanism. Substrate-binding positions include histidine 124, 154-155, arginine 192, arginine 198, 268-271, and lysine 342; these read RD and RADR. 5 residues coordinate Mn(2+): aspartate 409, histidine 413, aspartate 450, histidine 451, and histidine 469.

It belongs to the BPG-independent phosphoglycerate mutase family. In terms of assembly, monomer. Mn(2+) serves as cofactor.

It catalyses the reaction (2R)-2-phosphoglycerate = (2R)-3-phosphoglycerate. The protein operates within carbohydrate degradation; glycolysis; pyruvate from D-glyceraldehyde 3-phosphate: step 3/5. Catalyzes the interconversion of 2-phosphoglycerate and 3-phosphoglycerate. The sequence is that of 2,3-bisphosphoglycerate-independent phosphoglycerate mutase from Colwellia psychrerythraea (strain 34H / ATCC BAA-681) (Vibrio psychroerythus).